The chain runs to 136 residues: Small ribosomal subunit protein uS9 (136 aa).

It belongs to the universal ribosomal protein uS9 family.

The protein is Small ribosomal subunit protein uS9 of Borrelia recurrentis (strain A1).